We begin with the raw amino-acid sequence, 474 residues long: tRNA-2-methylthio-N(6)-dimethylallyladenosine synthase (474 aa).

One can recognise an MTTase N-terminal domain in the interval 3 to 120; that stretch reads KKLHIKTWGC…LPEMINHVQG (118 aa). [4Fe-4S] cluster contacts are provided by Cys12, Cys49, Cys83, Cys157, Cys161, and Cys164. The Radical SAM core domain occupies 143-375; that stretch reads RAEGPTAFVS…QQRITQQAME (233 aa). Residues 378–441 enclose the TRAM domain; that stretch reads REMVGTVQRI…ASSLRGILLR (64 aa).

Belongs to the methylthiotransferase family. MiaB subfamily. In terms of assembly, monomer. The cofactor is [4Fe-4S] cluster.

Its subcellular location is the cytoplasm. The enzyme catalyses N(6)-dimethylallyladenosine(37) in tRNA + (sulfur carrier)-SH + AH2 + 2 S-adenosyl-L-methionine = 2-methylsulfanyl-N(6)-dimethylallyladenosine(37) in tRNA + (sulfur carrier)-H + 5'-deoxyadenosine + L-methionine + A + S-adenosyl-L-homocysteine + 2 H(+). In terms of biological role, catalyzes the methylthiolation of N6-(dimethylallyl)adenosine (i(6)A), leading to the formation of 2-methylthio-N6-(dimethylallyl)adenosine (ms(2)i(6)A) at position 37 in tRNAs that read codons beginning with uridine. In Yersinia enterocolitica serotype O:8 / biotype 1B (strain NCTC 13174 / 8081), this protein is tRNA-2-methylthio-N(6)-dimethylallyladenosine synthase.